The following is a 654-amino-acid chain: Beta-galactosidase-1-like protein (654 aa).

Positions 1-27 (MAPKKPSCLRSLLLPLSLTLLLPQADT) are cleaved as a signal peptide. Asparagine 97 carries an N-linked (GlcNAc...) asparagine glycan. The active-site Proton donor is glutamate 186. N-linked (GlcNAc...) asparagine glycosylation is present at asparagine 243. Glutamate 264 (nucleophile) is an active-site residue.

It belongs to the glycosyl hydrolase 35 family.

It is found in the secreted. Probable glycosyl hydrolase. The protein is Beta-galactosidase-1-like protein (GLB1L) of Macaca fascicularis (Crab-eating macaque).